Here is a 245-residue protein sequence, read N- to C-terminus: Carboxymethylenebutenolidase homolog (245 aa).

An N-acetylalanine modification is found at Ala2. Lys36 is modified (N6-acetyllysine). Active-site residues include Cys132, Asp179, and His212. Ser223 carries the phosphoserine modification.

Belongs to the dienelactone hydrolase family. In terms of tissue distribution, widely expressed, with highest levels in liver, followed by kidney, small intestine and colon. Present in liver and intestine (at protein level).

Its subcellular location is the cytoplasm. The protein resides in the cytosol. Its activity is regulated as follows. Strongly inhibited by p-chloromercuribenzoate (PCMB). Partially inhibited by bis-p-nitrophenylphosphate (BNPP). Not inhibited by DFP, PMSF, eserine or EDTA. Cysteine hydrolase. Can convert the prodrug olmesartan medoxomil into its pharmacologically active metabolite olmerstatan, an angiotensin receptor blocker, in liver and intestine. May also activate beta-lactam antibiotics faropenem medoxomil and lenampicillin. The sequence is that of Carboxymethylenebutenolidase homolog (CMBL) from Homo sapiens (Human).